A 330-amino-acid polypeptide reads, in one-letter code: Polyprenyl transferase ausN (330 aa).

The next 5 helical transmembrane spans lie at alanine 116–proline 136, leucine 165–proline 185, isoleucine 189–valine 209, alanine 238–leucine 258, and valine 260–alanine 280.

Belongs to the UbiA prenyltransferase family. Mg(2+) serves as cofactor.

Its subcellular location is the membrane. It carries out the reaction 3,5-dimethylorsellinate + (2E,6E)-farnesyl diphosphate = (3R)-3-farnesyl-6-hydroxy-2,3,5-trimethyl-4-oxocyclohexa-1,5-diene-1-carboxylate + diphosphate + H(+). Its pathway is secondary metabolite biosynthesis; terpenoid biosynthesis. Its function is as follows. Polyprenyl transferase; part of the gene cluster B that mediates the biosynthesis of austinol and dehydroaustinol, two fungal meroterpenoids. The first step of the pathway is the synthesis of 3,5-dimethylorsellinic acid by the polyketide synthase ausA. 3,5-dimethylorsellinic acid is then prenylated by the polyprenyl transferase ausN. Further epoxidation by the FAD-dependent monooxygenase ausM and cyclization by the probable terpene cyclase ausL lead to the formation of protoaustinoid A. Protoaustinoid A is then oxidized to spiro-lactone preaustinoid A3 by the combined action of the FAD-binding monooxygenases ausB and ausC, and the dioxygenase ausE. Acid-catalyzed keto-rearrangement and ring contraction of the tetraketide portion of preaustinoid A3 by ausJ lead to the formation of preaustinoid A4. The aldo-keto reductase ausK, with the help of ausH, is involved in the next step by transforming preaustinoid A4 into isoaustinone which is in turn hydroxylated by the P450 monooxygenase ausI to form austinolide. Finally, the cytochrome P450 monooxygenase ausG modifies austinolide to austinol. Austinol can be further modified to dehydroaustinol which forms a diffusible complex with diorcinol that initiates conidiation. Due to genetic rearrangements of the clusters and the subsequent loss of some enzymes, the end products of the Emericella nidulans austinoid biosynthesis clusters are austinol and dehydroaustinol, even if additional enzymes, such as the O-acetyltransferase ausQ and the cytochrome P450 monooxygenase ausR are still functional. The sequence is that of Polyprenyl transferase ausN from Emericella nidulans (strain FGSC A4 / ATCC 38163 / CBS 112.46 / NRRL 194 / M139) (Aspergillus nidulans).